A 239-amino-acid chain; its full sequence is Phosphoglycolate phosphatase (239 aa).

Catalysis depends on D9, which acts as the Nucleophile. 2 residues coordinate Mg(2+): D9 and D11. K157 is a substrate binding site. D180 and D184 together coordinate Mg(2+).

It belongs to the archaeal SPP-like hydrolase family. The cofactor is Mg(2+).

It carries out the reaction 2-phosphoglycolate + H2O = glycolate + phosphate. Catalyzes the dephosphorylation of 2-phosphoglycolate. The protein is Phosphoglycolate phosphatase of Thermococcus kodakarensis (strain ATCC BAA-918 / JCM 12380 / KOD1) (Pyrococcus kodakaraensis (strain KOD1)).